The following is a 1293-amino-acid chain: Enterobactin synthase component F (1293 aa).

Residues 1–301 are elongation/condensation; that stretch reads MSQHLPLVAA…NVLPLGIHIA (301 aa). Positions 482 to 887 are adenylatione; it reads SYREMREQVV…ALPDVEQAVT (406 aa). One can recognise a Carrier domain in the interval 971–1046; that stretch reads APKAGSETII…KLATIIDAEE (76 aa). An O-(pantetheine 4'-phosphoryl)serine modification is found at Ser-1006. The interval 1066–1293 is thioesterase; it reads PTLFCFHPAS…GPIIRATLNR (228 aa). The Proton acceptor; for thioesterase activity role is filled by His-1271.

The protein belongs to the ATP-dependent AMP-binding enzyme family. EntF subfamily. Proteins EntB, EntD, EntE and EntF are the component of the enterobactin synthase. Components probably do not form a stable complex. EntF acts as a catalytic monomer. Interacts with the MbtH-like protein YbdZ. YbdZ binds to the adenylation domain, but does not alter the structure of the domain. The cofactor is pantetheine 4'-phosphate. Post-translationally, 4'-phosphopantetheine is transferred from CoA to a specific serine of apo-EntF by EntD. Holo-EntF so formed is then acylated with seryl-AMP.

It localises to the cytoplasm. The enzyme catalyses 3 2,3-dihydroxybenzoate + 3 L-serine + 6 ATP = enterobactin + 6 AMP + 6 diphosphate + 4 H(+). It catalyses the reaction holo-[peptidyl-carrier protein] + L-serine + ATP = L-seryl-[peptidyl-carrier protein] + AMP + diphosphate. Its pathway is siderophore biosynthesis; enterobactin biosynthesis. Adenylation activity is increased in the presence of the MbtH-like protein YbdZ. In terms of biological role, involved in the biosynthesis of the siderophore enterobactin (enterochelin), which is a macrocyclic trimeric lactone of N-(2,3-dihydroxybenzoyl)-serine. EntF catalyzes the activation of L-serine via ATP-dependent PPi exchange reaction to form seryladenylate. Activated L-serine is loaded onto the peptidyl carrier domain via a thioester linkage to the phosphopanthetheine moiety, forming seryl-S-Ppant-EntF. EntF acts then as the sole catalyst for the formation of the three amide and three ester linkages found in enterobactin, using seryladenylate and 2,3-dihydroxybenzoate-S-Ppant-EntB (DHB-S-Ppant-EntB) as substrates, via the formation of a DHB-Ser-S-Ppant-EntF intermediate. This Escherichia coli (strain K12) protein is Enterobactin synthase component F.